A 393-amino-acid chain; its full sequence is Sister chromatid cohesion protein DCC1 (393 aa).

It belongs to the DCC1 family. As to quaternary structure, component of the CTF18-RFC complex which consists of CTF8, CTF18, DSCC1 and the RFC complex. Interacts with CTF8 and CTF18. Interacts with DDX11.

Its subcellular location is the nucleus. In terms of biological role, loads PCNA onto primed templates regulating velocity, spacing and restart activity of replication forks. May couple DNA replication to sister chromatid cohesion through regulation of the acetylation of the cohesin subunit SMC3. In Homo sapiens (Human), this protein is Sister chromatid cohesion protein DCC1 (DSCC1).